The primary structure comprises 385 residues: MAGASERDAGKPAASGAGAVPKTKGRKVQGGRVVESRYLQYDKKTKKVSVAAKGEKPPTEGRKASTVPRSREESKVMGTSNLQSTMLEGHGLNPPDLDLSAIDDKSMSRKAPQLERSVAGTDKSTSLLRPDQKRTLRKKRRDLQETMDMMESQTLLMTLLSVKVENNLALLEEKAEKDLAAMCHEKERLQRQALELRRQLLLRQKHQELAAALDAQTEVLSPLPPVLERFKEEYKTLGRALDTTRHELSMQAVHMEGSGQELLDDLEPALRTTLQLLGDLSICSPEDSAQVQGASTQQPGASAQLNCLLKELKGLVAEKDLELCRLVSQVVELSSQASKEAALTNQEVWEEAQGTLTSSQGYFSPDVRKDHSPTQDRTNSSSLDP.

2 stretches are compositionally biased toward basic and acidic residues: residues methionine 1 to glycine 10 and lysine 53 to lysine 75. Residues methionine 1–glycine 78 are disordered. Residue alanine 2 is modified to N-acetylalanine. Serine 100 is modified (phosphoserine). A disordered region spans residues methionine 107–leucine 128. Positions aspartate 131–leucine 248 form a coiled coil. The disordered stretch occupies residues leucine 356–proline 385. The span at glutamine 375 to proline 385 shows a compositional bias: polar residues.

Belongs to the HAUS8 family. As to quaternary structure, component of the HAUS augmin-like complex. The complex interacts with the gamma-tubulin ring complex and this interaction is required for spindle assembly. Associates with microtubules. The interaction with microtubules is strong during mitosis, while it is weak or absent during interphase. It is unclear whether this interaction is direct or indirect. Interacts with EML3 (phosphorylated form) and TUBG1.

It localises to the cytoplasm. The protein localises to the cytoskeleton. It is found in the microtubule organizing center. The protein resides in the centrosome. Its subcellular location is the spindle. It localises to the spindle pole. Functionally, contributes to mitotic spindle assembly, maintenance of centrosome integrity and completion of cytokinesis as part of the HAUS augmin-like complex. The chain is HAUS augmin-like complex subunit 8 (Haus8) from Rattus norvegicus (Rat).